The following is a 359-amino-acid chain: MPSLLLLFTAALLSSWAQLLTDANSWWSLALNPVQRPEMFIIGAQPVCSQLPGLSPGQRKLCQLYQEHMAYIGEGAKTGIKECQHQFRQRRWNCSTADNASVFGRVMQIGSRETAFTHAVSAAGVVNAISRACREGELSTCGCSRTARPKDLPRDWLWGGCGDNVEYGYRFAKEFVDAREREKNFAKGSEEQGRVLMNLQNNEAGRRAVYKMADVACKCHGVSGSCSLKTCWLQLAEFRKVGDRLKEKYDSAAAMRVTRKGRLELVNSRFTQPTPEDLVYVDPSPDYCLRNESTGSLGTQGRLCNKTSEGMDGCELMCCGRGYNQFKSVQVERCHCKFHWCCFVRCKKCTEIVDQYICK.

The signal sequence occupies residues 1–17 (MPSLLLLFTAALLSSWA). A disulfide bridge connects residues cysteine 83 and cysteine 94. N-linked (GlcNAc...) asparagine glycosylation is found at asparagine 93 and asparagine 99. 10 disulfide bridges follow: cysteine 133-cysteine 141, cysteine 143-cysteine 161, cysteine 217-cysteine 231, cysteine 219-cysteine 226, cysteine 288-cysteine 319, cysteine 304-cysteine 314, cysteine 318-cysteine 358, cysteine 334-cysteine 349, cysteine 336-cysteine 346, and cysteine 341-cysteine 342. The O-palmitoleoyl serine; by PORCN moiety is linked to residue serine 223. N-linked (GlcNAc...) asparagine glycosylation is found at asparagine 291 and asparagine 305.

The protein belongs to the Wnt family. As to quaternary structure, interacts with PORCN. In terms of processing, palmitoleoylation is required for efficient binding to frizzled receptors. Depalmitoleoylation leads to Wnt signaling pathway inhibition.

The protein localises to the secreted. Its subcellular location is the extracellular space. It localises to the extracellular matrix. In terms of biological role, ligand for members of the frizzled family of seven transmembrane receptors. Probable developmental protein. May be a signaling molecule which affects the development of discrete regions of tissues. Is likely to signal over only few cell diameters. This chain is Protein Wnt-5b (WNT5B), found in Homo sapiens (Human).